A 1216-amino-acid polypeptide reads, in one-letter code: ATP-dependent DNA helicase Q4 (1216 aa).

2 disordered regions span residues 72-100 (EAQEPSCWGPHLSRAATQNTQSMPKQSLL) and 113-171 (NLKN…PRLG). Composition is skewed to polar residues over residues 86-100 (AATQNTQSMPKQSLL) and 114-137 (LKNTTQTGPTQSRKLQLQKRSLST). Phosphoserine occurs at positions 179 and 181. Positions 235-340 (SEVSVQSPEA…LHASPRPASL (106 aa)) are disordered. Polar residues-rich tracts occupy residues 248–262 (QPAQVLSQSPKSINS) and 306–320 (TQVNVPQPCNSSNQA). Residues 393–410 (DTCFRCGQFGHWASQCSQ) form a CCHC-type zinc finger. Positions 436–458 (AQRTGTASCHHSGEETQPAAPEL) are disordered. The Helicase ATP-binding domain occupies 506 to 684 (IMRILSGIST…AQHLGIAGEF (179 aa)). 519-526 (LPTGAGKS) contacts ATP. Positions 627-630 (DEVH) match the DEAH box motif. One can recognise a Helicase C-terminal domain in the interval 705–872 (DSDQALVTLL…AVKRLVQRVF (168 aa)). Zn(2+)-binding residues include Cys875, Cys877, Cys906, and His909.

It belongs to the helicase family. RecQ subfamily. In terms of assembly, interacts with UBR1 and UBR2. Interacts with MCM10; this interaction regulates RECQL4 unwinding activity. Interacts with TOPBP1. Requires Zn(2+) as cofactor.

Its subcellular location is the cytoplasm. The protein resides in the nucleus. It catalyses the reaction Couples ATP hydrolysis with the unwinding of duplex DNA by translocating in the 3'-5' direction.. The catalysed reaction is ATP + H2O = ADP + phosphate + H(+). In terms of biological role, an ATP-dependent DNA helicase which unwinds dsDNA with a 3'-overhang in a 3'-5' direction. May play a role in development of the palate and the limbs. May modulate chromosome segregation. The polypeptide is ATP-dependent DNA helicase Q4 (Recql4) (Mus musculus (Mouse)).